A 226-amino-acid polypeptide reads, in one-letter code: Lipoprotein-releasing system ATP-binding protein LolD (226 aa).

Positions 5–225 (LELVEIERHF…TLKEKKIVEL (221 aa)) constitute an ABC transporter domain. 41 to 48 (APSGAGKS) is an ATP binding site.

The protein belongs to the ABC transporter superfamily. Lipoprotein translocase (TC 3.A.1.125) family. The complex is composed of two ATP-binding proteins (LolD) and two transmembrane proteins (LolC and LolE).

It localises to the cell inner membrane. Functionally, part of the ABC transporter complex LolCDE involved in the translocation of mature outer membrane-directed lipoproteins, from the inner membrane to the periplasmic chaperone, LolA. Responsible for the formation of the LolA-lipoprotein complex in an ATP-dependent manner. The chain is Lipoprotein-releasing system ATP-binding protein LolD from Bartonella quintana (strain Toulouse) (Rochalimaea quintana).